A 127-amino-acid polypeptide reads, in one-letter code: Fluoride-specific ion channel FluC (127 aa).

The next 4 helical transmembrane spans lie at 8–28 (LLIA…QYWF), 37–57 (PWGT…VYAI), 68–88 (WKFL…TFSY), and 100–120 (ILFL…AFAG). Na(+) contacts are provided by G78 and T81.

It belongs to the fluoride channel Fluc/FEX (TC 1.A.43) family.

It is found in the cell inner membrane. The catalysed reaction is fluoride(in) = fluoride(out). Na(+) is not transported, but it plays an essential structural role and its presence is essential for fluoride channel function. In terms of biological role, fluoride-specific ion channel. Important for reducing fluoride concentration in the cell, thus reducing its toxicity. This chain is Fluoride-specific ion channel FluC, found in Leptospira interrogans serogroup Icterohaemorrhagiae serovar copenhageni (strain Fiocruz L1-130).